The primary structure comprises 37 residues: Omega/M-ectatotoxin-Et1a subunit A (37 aa).

Cysteines 12 and 34 form a disulfide.

This sequence belongs to the ectatomin family. Ectatomin-Et subfamily. As to quaternary structure, heterodimer of an A and a B chain; disulfide-linked. As to expression, expressed by the venom gland.

It is found in the secreted. The protein resides in the target cell membrane. In terms of biological role, algogenic for animals, human and insects. At high concentrations (0.5-1 uM), it acts as a pore-forming protein that forms nonselective cation channels both in cell and artificial membranes. It is weakly selective for cation over anions channel conductance is identical in both directions. At lower concentrations (1-10 nM), this heterodimer inhibits cardiac L-type calcium currents in isolated rat cardiac ventricular myocytes. This Ectatomma tuberculatum (Selva ant) protein is Omega/M-ectatotoxin-Et1a subunit A.